Consider the following 357-residue polypeptide: 3-isopropylmalate dehydrogenase (357 aa).

Substrate-binding residues include arginine 97, arginine 107, arginine 135, and aspartate 224. The Mg(2+) site is built by aspartate 224, aspartate 248, and aspartate 252. 282–294 (GSAPDIAGQDKAN) contributes to the NAD(+) binding site.

Belongs to the isocitrate and isopropylmalate dehydrogenases family. LeuB type 1 subfamily. Homodimer. Mg(2+) is required as a cofactor. It depends on Mn(2+) as a cofactor.

The protein localises to the cytoplasm. It catalyses the reaction (2R,3S)-3-isopropylmalate + NAD(+) = 4-methyl-2-oxopentanoate + CO2 + NADH. The protein operates within amino-acid biosynthesis; L-leucine biosynthesis; L-leucine from 3-methyl-2-oxobutanoate: step 3/4. In terms of biological role, catalyzes the oxidation of 3-carboxy-2-hydroxy-4-methylpentanoate (3-isopropylmalate) to 3-carboxy-4-methyl-2-oxopentanoate. The product decarboxylates to 4-methyl-2 oxopentanoate. This chain is 3-isopropylmalate dehydrogenase, found in Synechococcus sp. (strain CC9902).